Here is a 216-residue protein sequence, read N- to C-terminus: Putative holocytochrome-c1 synthase (216 aa).

Residues 1-46 (MQPEQLNQEEESKCPVPPEVRDAWLKSHGGKKPSEVHDTPHPTMLP) form a disordered region.

It belongs to the cytochrome c-type heme lyase family.

The protein resides in the mitochondrion inner membrane. The catalysed reaction is holo-[cytochrome c] = apo-[cytochrome c] + heme b. In terms of biological role, lyase that catalyzes the covalent linking of the heme group to the cytochrome C1 apoprotein to produce the mature functional cytochrome. This Schizosaccharomyces pombe (strain 972 / ATCC 24843) (Fission yeast) protein is Putative holocytochrome-c1 synthase.